Reading from the N-terminus, the 226-residue chain is ATP-dependent dethiobiotin synthetase BioD (226 aa).

Threonine 19 is a Mg(2+) binding site. Residue lysine 40 is part of the active site. Aspartate 53 and glutamate 114 together coordinate Mg(2+). ATP is bound by residues aspartate 53, 114–117, and 174–175; these read EGAG and NR.

The protein belongs to the dethiobiotin synthetase family. In terms of assembly, homodimer. Mg(2+) serves as cofactor.

The protein localises to the cytoplasm. The enzyme catalyses (7R,8S)-7,8-diammoniononanoate + CO2 + ATP = (4R,5S)-dethiobiotin + ADP + phosphate + 3 H(+). It functions in the pathway cofactor biosynthesis; biotin biosynthesis; biotin from 7,8-diaminononanoate: step 1/2. Catalyzes a mechanistically unusual reaction, the ATP-dependent insertion of CO2 between the N7 and N8 nitrogen atoms of 7,8-diaminopelargonic acid (DAPA, also called 7,8-diammoniononanoate) to form a ureido ring. This chain is ATP-dependent dethiobiotin synthetase BioD, found in Nitrosospira multiformis (strain ATCC 25196 / NCIMB 11849 / C 71).